The following is a 166-amino-acid chain: MAVVAVFPALARMLAVSRRRLVSPSLSMTSCRRCYRGDSPTDSQKDMIEIPLPPWQERTDESIETKRARLLYESRKRGMLENCILLSLFAKEHLQHMTEKQLNLYDRLINEPSNDWDIYYWATEAKPAPEIFENEVMTLLRDFAKNKNKEQRLRAPDLEYLFEKPH.

Residues 1–29 constitute a mitochondrion transit peptide; that stretch reads MAVVAVFPALARMLAVSRRRLVSPSLSMT.

The protein belongs to the SDHAF2 family. Interacts with SDHA within the SDH catalytic dimer.

It is found in the mitochondrion matrix. Plays an essential role in the assembly of succinate dehydrogenase (SDH), an enzyme complex (also referred to as respiratory complex II) that is a component of both the tricarboxylic acid (TCA) cycle and the mitochondrial electron transport chain, and which couples the oxidation of succinate to fumarate with the reduction of ubiquinone (coenzyme Q) to ubiquinol. Required for flavinylation (covalent attachment of FAD) of the flavoprotein subunit SDHA of the SDH catalytic dimer. The sequence is that of Succinate dehydrogenase assembly factor 2, mitochondrial from Bos taurus (Bovine).